Consider the following 156-residue polypeptide: 6,7-dimethyl-8-ribityllumazine synthase (156 aa).

5-amino-6-(D-ribitylamino)uracil contacts are provided by residues phenylalanine 23, 57–59, and 81–83; these read SFE and AVI. Residue 86–87 participates in (2S)-2-hydroxy-3-oxobutyl phosphate binding; the sequence is GT. Catalysis depends on histidine 89, which acts as the Proton donor. Phenylalanine 114 lines the 5-amino-6-(D-ribitylamino)uracil pocket. Arginine 128 provides a ligand contact to (2S)-2-hydroxy-3-oxobutyl phosphate.

Belongs to the DMRL synthase family. Forms an icosahedral capsid composed of 60 subunits, arranged as a dodecamer of pentamers.

It carries out the reaction (2S)-2-hydroxy-3-oxobutyl phosphate + 5-amino-6-(D-ribitylamino)uracil = 6,7-dimethyl-8-(1-D-ribityl)lumazine + phosphate + 2 H2O + H(+). It participates in cofactor biosynthesis; riboflavin biosynthesis; riboflavin from 2-hydroxy-3-oxobutyl phosphate and 5-amino-6-(D-ribitylamino)uracil: step 1/2. Catalyzes the formation of 6,7-dimethyl-8-ribityllumazine by condensation of 5-amino-6-(D-ribitylamino)uracil with 3,4-dihydroxy-2-butanone 4-phosphate. This is the penultimate step in the biosynthesis of riboflavin. This is 6,7-dimethyl-8-ribityllumazine synthase from Alkalilimnicola ehrlichii (strain ATCC BAA-1101 / DSM 17681 / MLHE-1).